Consider the following 1036-residue polypeptide: Hexagonally packed intermediate-layer surface protein (1036 aa).

Residues 1 to 17 (MKKNIALMALTGVLTLA) form the signal peptide. Disulfide bonds link Cys-74-Cys-86, Cys-256-Cys-275, and Cys-642-Cys-754.

Post-translationally, glycosylated; contains six glycans. In terms of processing, acylated in the N-terminal region. The N-terminus is blocked.

The protein localises to the secreted. It localises to the cell wall. The protein resides in the S-layer. Its function is as follows. Shape maintenance, possible protection from noxious enzymes or exogenous and unsettling DNA, and may mediate homotypic cell-cell contacts. This Deinococcus radiodurans protein is Hexagonally packed intermediate-layer surface protein (hpi).